A 113-amino-acid polypeptide reads, in one-letter code: Mediator of RNA polymerase II transcription subunit 22 (113 aa).

This sequence belongs to the Mediator complex subunit 22 family. Component of the Mediator complex.

Its subcellular location is the nucleus. Component of the Mediator complex, a coactivator involved in the regulated transcription of nearly all RNA polymerase II-dependent genes. Mediator functions as a bridge to convey information from gene-specific regulatory proteins to the basal RNA polymerase II transcription machinery. Mediator is recruited to promoters by direct interactions with regulatory proteins and serves as a scaffold for the assembly of a functional preinitiation complex with RNA polymerase II and the general transcription factors. This is Mediator of RNA polymerase II transcription subunit 22 (SRB6) from Candida glabrata (strain ATCC 2001 / BCRC 20586 / JCM 3761 / NBRC 0622 / NRRL Y-65 / CBS 138) (Yeast).